A 183-amino-acid chain; its full sequence is MSSFFYKEILRMTLRFFTVTDEYIAYLRKFESKVHYQYENNASTYVGVVLKKNDFNYFIPLSSYKKGNPEKDKAMKKRSRIVTRLFEIGNINNPLGYLLHHNMIPVPDSELIPLPLDLKKPKHKMMQKQLIYMKSISEKIENKSEVVYRKAAHEKDGYYLKFSCDFKLLEAKATLYSKKSTFQ.

This sequence belongs to the ToxN/AbiQ toxin family. In terms of assembly, forms a triangular heterohexamer with a single 35-nt-long repeat of RNA antitoxin AntiQ.

The protein localises to the cytoplasm. Its function is as follows. Toxic component of a type III toxin-antitoxin (TA) system. An endoribonuclease that is probably sequence-specific. It is neutralized by its cognate antitoxin RNA AntiQ, which has 2.8 35 nucleotide-long repeats. Cannot be cloned in L.lactis subsp. cremoris strain NZ9000 in the absence of the antitoxin gene; expression in strain NZ9000 even in the presence of antiQ inhibits growth in a bacteriostatic fashion. Confers resistance to 936 and c2 phages but not P335 phages in L.lactis, causes an abortive infection (Abi phenotype). Viral DNA is replicated but not cleaved from its concatemeric form, while the viral major structural protein is produced normally in the presence of this protein. Operon expression in E.coli confers resistance to 3 phages of the Myoviridae family (T4, RB69 and phage 2) and 1 of the Siphoviridae family (T5), but not other tested phages (T1, T3, lambda vir, HK97, Mu and pilH alpha). The presence of this operon in L.lactis subsp. lactis strain IL1403 during phage P008 infection alters the viral transcription profiles. This Lactococcus lactis subsp. lactis (Streptococcus lactis) protein is Endoribonuclease AbiQ.